A 343-amino-acid chain; its full sequence is Protein RecA (343 aa).

64-71 (GPESSGKT) is an ATP binding site.

This sequence belongs to the RecA family.

Its subcellular location is the cytoplasm. In terms of biological role, can catalyze the hydrolysis of ATP in the presence of single-stranded DNA, the ATP-dependent uptake of single-stranded DNA by duplex DNA, and the ATP-dependent hybridization of homologous single-stranded DNAs. It interacts with LexA causing its activation and leading to its autocatalytic cleavage. The chain is Protein RecA from Bacillus cereus (strain B4264).